A 99-amino-acid polypeptide reads, in one-letter code: Large ribosomal subunit protein bL21 (99 aa).

This sequence belongs to the bacterial ribosomal protein bL21 family. Part of the 50S ribosomal subunit. Contacts protein L20.

Its function is as follows. This protein binds to 23S rRNA in the presence of protein L20. This is Large ribosomal subunit protein bL21 from Mesoplasma florum (strain ATCC 33453 / NBRC 100688 / NCTC 11704 / L1) (Acholeplasma florum).